Consider the following 279-residue polypeptide: Nucleotide-binding protein THA_1518 (279 aa).

Residue 9 to 16 (GLSGAGKS) coordinates ATP. Residue 57–60 (DARS) participates in GTP binding.

Belongs to the RapZ-like family.

Functionally, displays ATPase and GTPase activities. The polypeptide is Nucleotide-binding protein THA_1518 (Thermosipho africanus (strain TCF52B)).